The chain runs to 396 residues: Probable sugar efflux transporter (396 aa).

A run of 12 helical transmembrane segments spans residues 15 to 35, 50 to 70, 81 to 101, 103 to 123, 136 to 156, 170 to 190, 209 to 229, 246 to 266, 275 to 295, 299 to 319, 333 to 353, and 364 to 384; these read VVTL…PVGL, VGIM…PFML, LICL…SWSF, VLVI…SITA, AQAL…GLPL, FFAI…LLPL, PALM…YTAY, FATA…VIFG, TLVS…LPAA, IHLG…GLGM, VAMA…ALVG, and MIGY…IIIF.

It belongs to the major facilitator superfamily. SotB (TC 2.A.1.2) family.

Its subcellular location is the cell inner membrane. Functionally, involved in the efflux of sugars. The physiological role may be the reduction of the intracellular concentration of toxic sugars or sugar metabolites. In Escherichia coli (strain SMS-3-5 / SECEC), this protein is Probable sugar efflux transporter.